A 496-amino-acid chain; its full sequence is L-arabinose isomerase (496 aa).

The Mn(2+) site is built by E305, E330, H347, and H446.

The protein belongs to the arabinose isomerase family. It depends on Mn(2+) as a cofactor.

It carries out the reaction beta-L-arabinopyranose = L-ribulose. The protein operates within carbohydrate degradation; L-arabinose degradation via L-ribulose; D-xylulose 5-phosphate from L-arabinose (bacterial route): step 1/3. Functionally, catalyzes the conversion of L-arabinose to L-ribulose. In Bacillus subtilis (strain 168), this protein is L-arabinose isomerase.